Consider the following 363-residue polypeptide: Protein LEG1 homolog (363 aa).

A signal peptide spans 1–19 (MQCVWTLSLLQLVALWANA). 3 N-linked (GlcNAc...) asparagine glycosylation sites follow: asparagine 79, asparagine 261, and asparagine 292.

It belongs to the LEG1 family.

It is found in the secreted. Its function is as follows. May be involved in early liver development. The polypeptide is Protein LEG1 homolog (Oncorhynchus mykiss (Rainbow trout)).